A 276-amino-acid chain; its full sequence is Homeobox-leucine zipper protein HOX22 (276 aa).

Positions 70–130 (AGERKRRFTE…NKRARWRSKQ (61 aa)) form a DNA-binding region, homeobox. The tract at residues 129-173 (KQLEHDYAALRSKYDALHSRVESLKQEKLALTVQLHELRERLRER) is leucine-zipper. The segment at 170-212 (LREREERSGNGGAATTAASSSSCNGSGSEEVDDDDDKRNAAAG) is disordered. A compositionally biased stretch (low complexity) spans 182–197 (AATTAASSSSCNGSGS).

Belongs to the HD-ZIP homeobox family. Class I subfamily. Expressed in seedlings, roots, stems, leaf sheaths and blades and panicles.

The protein resides in the nucleus. Functionally, probable transcription factor. This is Homeobox-leucine zipper protein HOX22 (HOX22) from Oryza sativa subsp. japonica (Rice).